The primary structure comprises 212 residues: Ribosome maturation factor RimM (212 aa).

The 77-residue stretch at 105 to 181 (EEEFYYADLI…IDSITAGLDN (77 aa)) folds into the PRC barrel domain. The interval 181 to 212 (NAELSGEEDEAEGPESARGSRPRGPKSAGEPR) is disordered.

It belongs to the RimM family. In terms of assembly, binds ribosomal protein uS19.

It localises to the cytoplasm. Its function is as follows. An accessory protein needed during the final step in the assembly of 30S ribosomal subunit, possibly for assembly of the head region. Essential for efficient processing of 16S rRNA. May be needed both before and after RbfA during the maturation of 16S rRNA. It has affinity for free ribosomal 30S subunits but not for 70S ribosomes. This is Ribosome maturation factor RimM from Chelativorans sp. (strain BNC1).